Reading from the N-terminus, the 257-residue chain is tRNA pseudouridine synthase A (257 aa).

The active-site Nucleophile is the D52. Position 111 (Y111) interacts with substrate.

The protein belongs to the tRNA pseudouridine synthase TruA family. Homodimer.

It catalyses the reaction uridine(38/39/40) in tRNA = pseudouridine(38/39/40) in tRNA. Formation of pseudouridine at positions 38, 39 and 40 in the anticodon stem and loop of transfer RNAs. The sequence is that of tRNA pseudouridine synthase A from Dinoroseobacter shibae (strain DSM 16493 / NCIMB 14021 / DFL 12).